The primary structure comprises 466 residues: Ras GTPase-activating protein-binding protein 1 (466 aa).

Positions 11-133 (VGREFVRQYY…FYVHNDIFRY (123 aa)) constitute an NTF2 domain. Residues Lys36, Lys50, Lys59, Lys64, Lys76, and Lys123 each participate in a glycyl lysine isopeptide (Lys-Gly) (interchain with G-Cter in ubiquitin) cross-link. An acidic disordered region region spans residues 142–225 (VTEPQEESEE…EPVLEETVPE (84 aa)). Thr143 is subject to Phosphothreonine. 2 disordered regions span residues 144 to 172 (EPQEESEEEVEEPEERQQTPEVVPDDSGT) and 184 to 243 (EEHL…QTVQ). Acidic residues-rich tracts occupy residues 145–157 (PQEESEEEVEEPE) and 185–206 (EHLEEPVAEPEPDPEPEPEQEP). Ser149 is modified (phosphoserine). Ser231, Ser232, Ser250, and Ser253 each carry phosphoserine. Positions 255–329 (TSKNLPPSGA…REAGEQGDIE (75 aa)) are disordered. Composition is skewed to basic and acidic residues over residues 297–307 (PQRDQRVREQR) and 318–329 (PIREAGEQGDIE). One can recognise an RRM domain in the interval 340–415 (HQLFIGNLPH…VRLNVEEKKT (76 aa)). Residues Lys353 and Lys357 each participate in a glycyl lysine isopeptide (Lys-Gly) (interchain with G-Cter in ubiquitin) cross-link. Ser373 carries the phosphoserine modification. Lys376 is covalently cross-linked (Glycyl lysine isopeptide (Lys-Gly) (interchain with G-Cter in ubiquitin)). The residue at position 376 (Lys376) is an N6-acetyllysine; alternate. Lys376 is covalently cross-linked (Glycyl lysine isopeptide (Lys-Gly) (interchain with G-Cter in SUMO2); alternate). Lys393 is covalently cross-linked (Glycyl lysine isopeptide (Lys-Gly) (interchain with G-Cter in ubiquitin); alternate). The interval 410–466 (VEEKKTRAAREGDRRDNRLRGPGGPRGGLGGGMRGPPRGGMVQKPGFGVGRGLAPRQ) is RG-rich region. Residues 413–428 (KKTRAAREGDRRDNRL) are compositionally biased toward basic and acidic residues. Residues 413 to 466 (KKTRAAREGDRRDNRLRGPGGPRGGLGGGMRGPPRGGMVQKPGFGVGRGLAPRQ) are disordered. Asymmetric dimethylarginine is present on Arg429. Gly residues predominate over residues 430–447 (GPGGPRGGLGGGMRGPPR). Residue Arg435 is modified to Asymmetric dimethylarginine; alternate. An omega-N-methylarginine; alternate mark is found at Arg435, Arg447, Arg460, and Arg465. Arg460 carries the dimethylated arginine; alternate modification.

Homodimer and oligomer. Component of a TAU mRNP complex, at least composed of IGF2BP1, ELAVL4 and G3BP1. Binds to the SH3 domain of Ras GTPase-activating protein (RASA1) in proliferating cells. No interaction in quiescent cells. Interacts (via NTF2 domain) with USP10; inhibiting stress granule formation by lowering G3BP1 valence. Interacts (via NTF2 domain) with CAPRIN1; promoting stress granule formation by lowering the saturation-concentration of G3BP1. Interacts (via NTF2 domain) with UBAP2L; promoting stress granule formation. Associates (via RG-rich region) with 40S ribosome subunits. Interacts with RPTOR and SPAG5; this complex is increased by oxidative stress. Interacts with ATXN2L. Interacts with STYXL1. Interacts with CGAS (via N-terminus); this interaction promotes the DNA-binding and activation of CGAS. Interacts (via C-terminus) with RIGI. Interacts with PABPC1. Interacts with QKI (isoforms QKI6 and QKI7); directing N(7)-methylguanine-containing mRNAs to stress granules. Requires Mg(2+) as cofactor. Phosphorylation of the acidic disordered region regulates stress granule assembly. RASA1-dependent phosphorylation of Ser-149 induces a conformational change that prevents self-association. Dephosphorylation after HRAS activation is required for stress granule assembly. Ser-149 phosphorylation induces partial nuclear localization. In terms of processing, arg-435 is dimethylated, probably to asymmetric dimethylarginine. Post-translationally, ubiquitinated by TRIM21 via 'Lys-63'-linked polyubiquitination in the NTF2 domain in response to heat shock, leading to stress granule disassembly: ubiquitination promotes interaction with the FAF2 adapter, followed by interaction with VCP, which extracts G3BP1 from stress granules, leading to stress granule disassembly. In case of prolonged stress, ubiquitination by TRIM21 leads to autophagy-dependent degradation of G3BP1 via recruitment of ubiquitinated G3BP1 by SQSTM1 and/or CALCOCO2 to autophagosomes.

It is found in the cytoplasm. The protein resides in the cytosol. The protein localises to the perikaryon. It localises to the stress granule. Its subcellular location is the nucleus. The enzyme catalyses ATP + H2O = ADP + phosphate + H(+). With respect to regulation, under physiological conditions, G3BP1 adopts a compact state that is stabilized by intramolecular interactions between the RG-rich and the acidic regions that inhibit phase separation. Upon stress, polysomes disassemble and mRNAs are released in an unfolded protein-free state. Binding of unfolded mRNA to G3BP1 outcompetes the intramolecular interactions and RNA-bound G3BP1 adopts an expanded conformation in which the RG-rich region becomes exposed to engage in protein-protein and protein-RNA interactions, allowing physical cross-linking of RNA molecules to form protein-RNA condensates, leading to liquid-liquid phase separation (LLPS). Functionally, protein involved in various processes, such as stress granule formation and innate immunity. Plays an essential role in stress granule formation. Stress granules are membraneless compartments that store mRNAs and proteins, such as stalled translation pre-initiation complexes, in response to stress. Promotes formation of stress granules phase-separated membraneless compartment by undergoing liquid-liquid phase separation (LLPS) upon unfolded RNA-binding: functions as a molecular switch that triggers RNA-dependent LLPS in response to a rise in intracellular free RNA concentrations. Also acts as an ATP- and magnesium-dependent helicase: unwinds DNA/DNA, RNA/DNA, and RNA/RNA substrates with comparable efficiency. Acts unidirectionally by moving in the 5' to 3' direction along the bound single-stranded DNA. Unwinds preferentially partial DNA and RNA duplexes having a 17 bp annealed portion and either a hanging 3' tail or hanging tails at both 5'- and 3'-ends. Plays an essential role in innate immunity by promoting CGAS and RIGI activity. Participates in the DNA-triggered cGAS/STING pathway by promoting the DNA binding and activation of CGAS. Triggers the condensation of cGAS, a process probably linked to the formation of membrane-less organelles. Also enhances RIGI-induced type I interferon production probably by helping RIGI at sensing pathogenic RNA. May also act as a phosphorylation-dependent sequence-specific endoribonuclease in vitro: Cleaves exclusively between cytosine and adenine and cleaves MYC mRNA preferentially at the 3'-UTR. This chain is Ras GTPase-activating protein-binding protein 1 (G3BP1), found in Pongo abelii (Sumatran orangutan).